The following is a 305-amino-acid chain: D-alanine--D-alanine ligase (305 aa).

An ATP-grasp domain is found at 99–300; the sequence is KLFFEKAGIR…YEEMIQTFVN (202 aa). 126 to 181 is a binding site for ATP; that stretch reads NFTGTYPVVVKPNQEGSTIGLTVAETEEELLQGIEEAFRHDDTILIEEFIAGTEVT.

The protein belongs to the D-alanine--D-alanine ligase family.

Its subcellular location is the cytoplasm. It catalyses the reaction 2 D-alanine + ATP = D-alanyl-D-alanine + ADP + phosphate + H(+). The protein operates within cell wall biogenesis; peptidoglycan biosynthesis. Its function is as follows. Cell wall formation. In Halalkalibacterium halodurans (strain ATCC BAA-125 / DSM 18197 / FERM 7344 / JCM 9153 / C-125) (Bacillus halodurans), this protein is D-alanine--D-alanine ligase.